The chain runs to 431 residues: Argininosuccinate lyase (431 aa).

Belongs to the lyase 1 family. Argininosuccinate lyase subfamily.

Its subcellular location is the cytoplasm. It catalyses the reaction 2-(N(omega)-L-arginino)succinate = fumarate + L-arginine. Its pathway is amino-acid biosynthesis; L-arginine biosynthesis; L-arginine from L-ornithine and carbamoyl phosphate: step 3/3. In Stenotrophomonas maltophilia (strain K279a), this protein is Argininosuccinate lyase.